The chain runs to 42 residues: Photosystem I reaction center subunit IX (42 aa).

The chain crosses the membrane as a helical span at residues 8 to 28; the sequence is YLSTAPVLLTIWLSFTAALVI.

The protein belongs to the PsaJ family.

It is found in the plastid. The protein localises to the chloroplast thylakoid membrane. In terms of biological role, may help in the organization of the PsaE and PsaF subunits. The protein is Photosystem I reaction center subunit IX of Guillardia theta (Cryptophyte).